The primary structure comprises 299 residues: GDNF family receptor alpha-4 (299 aa).

The first 20 residues, M1–S20, serve as a signal peptide directing secretion. Residues R145–G198 are disordered. The segment covering L177–G198 has biased composition (low complexity). Residue N208 is glycosylated (N-linked (GlcNAc...) asparagine). A lipid anchor (GPI-anchor amidated glycine) is attached at G278. Positions R279–L299 are cleaved as a propeptide — removed in mature form.

This sequence belongs to the GDNFR family. In terms of assembly, interacts with ARTN ligand and RET: forms a 2:2:2 ternary complex composed of ARTN ligand, GFRA3 and RET receptor. Interacts with SORL1. As to expression, predominantly expressed in the adult thyroid gland. Low levels also found in fetal adrenal and thyroid glands.

It localises to the cell membrane. The protein localises to the secreted. Receptor for persephin (PSPN), a growth factor that exhibits neurotrophic activity on mesencephalic dopaminergic and motor neurons. Acts by binding to its coreceptor, GFRA4, leading to autophosphorylation and activation of the RET receptor. May be important in C-cell development and, in the postnatal development of the adrenal medulla. The chain is GDNF family receptor alpha-4 (GFRA4) from Homo sapiens (Human).